A 376-amino-acid chain; its full sequence is Protein-tyrosine sulfotransferase 2 (376 aa).

Over 1–8 the chain is Cytoplasmic; sequence MRLSVRKV. A helical; Signal-anchor for type II membrane protein membrane pass occupies residues 9 to 25; it reads LLAAGCALALVLAVQLG. At 26–376 the chain is on the lumenal side; sequence QQVLECRAVL…NSTSPHLGSS (351 aa). 77-81 contacts 3'-phosphoadenylyl sulfate; sequence RSGTT. Cysteines 95 and 155 form a disulfide. E98 acts as the Proton donor/acceptor in catalysis. Positions 100-104 are interaction with peptide substrate; it reads RIIPR. 3 residues coordinate 3'-phosphoadenylyl sulfate: R182, S190, and R194. A disulfide bridge links C224 with C232. Residues Y237, 284–293, and K299 each bind 3'-phosphoadenylyl sulfate; that span reads STDQVIKPVN. 2 N-linked (GlcNAc...) asparagine glycosylation sites follow: N342 and N367.

This sequence belongs to the protein sulfotransferase family. In terms of assembly, homodimer. Can also form heterodimers with TPST1. N-glycosylated. Widely expressed.

It is found in the golgi apparatus membrane. It carries out the reaction L-tyrosyl-[protein] + 3'-phosphoadenylyl sulfate = O-sulfo-L-tyrosine-[protein] + adenosine 3',5'-bisphosphate + H(+). Catalyzes the O-sulfation of tyrosine residues within acidic motifs of polypeptides, using 3'-phosphoadenylyl sulfate (PAPS) as cosubstrate. The polypeptide is Protein-tyrosine sulfotransferase 2 (Tpst2) (Mus musculus (Mouse)).